A 61-amino-acid polypeptide reads, in one-letter code: MPSIKQCSFCGKEIPPATGLMYIRNDGSILWFCSNKCKKSMLKLHRDPKKLKWTKSYIGGK.

4 residues coordinate Zn(2+): Cys7, Cys10, Cys33, and Cys37. A C4-type zinc finger spans residues 7-37 (CSFCGKEIPPATGLMYIRNDGSILWFCSNKC).

It belongs to the eukaryotic ribosomal protein eL24 family. As to quaternary structure, part of the 50S ribosomal subunit. Forms a cluster with proteins L3 and L14. Zn(2+) serves as cofactor.

In terms of biological role, binds to the 23S rRNA. The protein is Large ribosomal subunit protein eL24 of Sulfurisphaera tokodaii (strain DSM 16993 / JCM 10545 / NBRC 100140 / 7) (Sulfolobus tokodaii).